The chain runs to 239 residues: Ribosomal RNA small subunit methyltransferase G (239 aa).

Residues Gly-79, Phe-84, 130–131, and Arg-149 each bind S-adenosyl-L-methionine; that span reads AE. The segment covering 218–227 has biased composition (basic residues); sequence KHKKTPKKYP. The interval 218 to 239 is disordered; that stretch reads KHKKTPKKYPRQAGTPNKKPIA.

This sequence belongs to the methyltransferase superfamily. RNA methyltransferase RsmG family.

The protein localises to the cytoplasm. Functionally, specifically methylates the N7 position of a guanine in 16S rRNA. The protein is Ribosomal RNA small subunit methyltransferase G of Leuconostoc citreum (strain KM20).